The primary structure comprises 319 residues: Putative ribose-phosphate pyrophosphokinase 2 (319 aa).

ATP-binding positions include 40–42 (DGE) and 99–100 (RQ). Histidine 133 contributes to the Mg(2+) binding site. D-ribose 5-phosphate-binding positions include aspartate 222 and 226–230 (NTGRT).

It belongs to the ribose-phosphate pyrophosphokinase family. Class I subfamily. As to quaternary structure, homohexamer. Requires Mg(2+) as cofactor.

The protein resides in the cytoplasm. It catalyses the reaction D-ribose 5-phosphate + ATP = 5-phospho-alpha-D-ribose 1-diphosphate + AMP + H(+). It participates in metabolic intermediate biosynthesis; 5-phospho-alpha-D-ribose 1-diphosphate biosynthesis; 5-phospho-alpha-D-ribose 1-diphosphate from D-ribose 5-phosphate (route I): step 1/1. In terms of biological role, involved in the biosynthesis of the central metabolite phospho-alpha-D-ribosyl-1-pyrophosphate (PRPP) via the transfer of pyrophosphoryl group from ATP to 1-hydroxyl of ribose-5-phosphate (Rib-5-P). This is Putative ribose-phosphate pyrophosphokinase 2 from Streptococcus pneumoniae serotype 4 (strain ATCC BAA-334 / TIGR4).